A 281-amino-acid polypeptide reads, in one-letter code: UPF0500 protein C1orf216 homolog (281 aa).

Polar residues predominate over residues 1-12; it reads MFTIQKPDTVSH. The disordered stretch occupies residues 1-197; that stretch reads MFTIQKPDTV…SSSDSDSISV (197 aa). Basic and acidic residues predominate over residues 45-74; it reads TYDKNENWSQDKKGGEEGENKSKSEDEHSS. Composition is skewed to low complexity over residues 92–102, 147–161, and 169–178; these read STGSEGISLSS, SSSL…VSAS, and PAPTTTPQEN. Positions 179-190 are enriched in acidic residues; that stretch reads PETEDSDVESSS. Positions 198–257 form a coiled coil; the sequence is TLSEAFQSLQDKEKLKEREKEKHHAQLTMYRRLALLRWIRALQQKVRDQQNRLQESFDTI.

Belongs to the UPF0500 family.

The chain is UPF0500 protein C1orf216 homolog from Xenopus laevis (African clawed frog).